A 160-amino-acid polypeptide reads, in one-letter code: Phosphopantetheine adenylyltransferase (160 aa).

The protein belongs to the eukaryotic CoaD family.

The protein localises to the cytoplasm. It carries out the reaction (R)-4'-phosphopantetheine + ATP + H(+) = 3'-dephospho-CoA + diphosphate. The protein operates within cofactor biosynthesis; coenzyme A biosynthesis. Reversibly transfers an adenylyl group from ATP to 4'-phosphopantetheine, yielding dephospho-CoA (dPCoA) and pyrophosphate. In Pyrococcus furiosus (strain ATCC 43587 / DSM 3638 / JCM 8422 / Vc1), this protein is Phosphopantetheine adenylyltransferase.